Reading from the N-terminus, the 193-residue chain is Putative manganese efflux pump MntP (193 aa).

Transmembrane regions (helical) follow at residues 3 to 23 (PLSI…AAIG), 37 to 57 (VRAG…GWML), 66 to 86 (AAFD…HMIV), 109 to 131 (LALA…SLAF), 146 to 166 (CTLS…ALIG), and 171 to 191 (ILGG…HLSG).

Belongs to the MntP (TC 9.B.29) family.

The protein resides in the cell inner membrane. Its function is as follows. Probably functions as a manganese efflux pump. This chain is Putative manganese efflux pump MntP, found in Xanthomonas campestris pv. campestris (strain 8004).